A 368-amino-acid polypeptide reads, in one-letter code: Transcription factor bHLH30 (368 aa).

Residues 3–30 adopt a coiled-coil conformation; it reads AKKEEEEEEEEDSSEAMNNIQNYQNDLF. Positions 173-222 constitute a bHLH domain; that stretch reads AASKSHSEAERRRRERINNHLAKLRSILPNTTKTDKASLLAEVIQHVKEL. The disordered stretch occupies residues 333-368; sequence KSNVEESSSSGNAKRQRMSSHNTITIVEQQQQYNQR. A compositionally biased stretch (polar residues) spans 337 to 368; that stretch reads EESSSSGNAKRQRMSSHNTITIVEQQQQYNQR.

Homodimer. Interacts with LHW.

The protein resides in the nucleus. In Arabidopsis thaliana (Mouse-ear cress), this protein is Transcription factor bHLH30 (BHLH30).